The primary structure comprises 187 residues: CASP-like protein 2C1 (187 aa).

The Cytoplasmic segment spans residues 1-14; sequence MVAAARVVSGVKAE. A helical membrane pass occupies residues 15 to 35; sequence GLLRGACAALAAAAALLLGLS. Over 36 to 54 the chain is Extracellular; sequence TQTETVLLVRKKGTVKDVQ. Residues 55–75 traverse the membrane as a helical segment; it reads ALWVLAMAAASAAGYHLLQLL. Over 76 to 97 the chain is Cytoplasmic; the sequence is KCLYLGRGGGRALAWTCLLLDK. Residues 98–118 traverse the membrane as a helical segment; the sequence is ACAYATFATTVAAAQACVVAL. Residues 119 to 139 lie on the Extracellular side of the membrane; sequence DGAHALQWTKLCNIYTRFCEQ. The chain crosses the membrane as a helical span at residues 140 to 160; it reads VAGSLVLGMLAAVGTAVLSAA. Residues 161–187 are Cytoplasmic-facing; that stretch reads SARNVFRHYYCSSHSPPAPPPETCDAH.

This sequence belongs to the Casparian strip membrane proteins (CASP) family. Homodimer and heterodimers.

It localises to the cell membrane. The sequence is that of CASP-like protein 2C1 from Zea mays (Maize).